The sequence spans 319 residues: MRIVVLAGGIGGARFLRGLRQAAPDADITVIGNTGDDIHLFGLKVCPDLDTVMYTLGGGINEEQGWGRADETFHLKEELAAYGVGPEWFGLGDRDFATHIVRTQMITAGFPLSAVTEALCDRWKPGVRLIPMTDDRVETHVAVELDGERKAVHFQEYWVRLRASVPAEAVVPVGAEQAKPAPGVLEAIGEADVILFPPSNPVVSIGTILAVPGIREAIADAGVPVVGLSPIVGDAPVRGMADKVLAAVGVESTAAAVAEHYGSGLLDGWLVDTVDADAVTRVRAAGVLCRAVPLMMTDLDATAQMAREALTLAEEVREA.

D50 contributes to the 7,8-didemethyl-8-hydroxy-5-deazariboflavin binding site.

This sequence belongs to the CofD family. As to quaternary structure, homodimer. Mg(2+) serves as cofactor.

The catalysed reaction is enolpyruvoyl-2-diphospho-5'-guanosine + 7,8-didemethyl-8-hydroxy-5-deazariboflavin = dehydro coenzyme F420-0 + GMP + H(+). It participates in cofactor biosynthesis; coenzyme F420 biosynthesis. In terms of biological role, catalyzes the transfer of the phosphoenolpyruvate moiety from enoylpyruvoyl-2-diphospho-5'-guanosine (EPPG) to 7,8-didemethyl-8-hydroxy-5-deazariboflavin (FO) with the formation of dehydro coenzyme F420-0 and GMP. The polypeptide is Phosphoenolpyruvate transferase (Streptomyces coelicolor (strain ATCC BAA-471 / A3(2) / M145)).